The primary structure comprises 60 residues: UPF0434 protein Daci_3569 (60 aa).

It belongs to the UPF0434 family.

The sequence is that of UPF0434 protein Daci_3569 from Delftia acidovorans (strain DSM 14801 / SPH-1).